The chain runs to 340 residues: ATP synthase subunit a (340 aa).

Residues 1–32 form the signal peptide; sequence MKRVNVIQAKAFLKVIALLVPLLLNANGPAFA. A run of 6 helical transmembrane segments spans residues 107-127, 172-192, 197-217, 236-256, 269-289, and 296-316; these read HVVM…LVGS, LLTV…PYGA, NINV…VAAL, ALWI…PVAL, IVIL…VAVV, and IFIY…FTML.

The protein belongs to the ATPase A chain family. In terms of assembly, F-type ATPases have 2 components, CF(1) - the catalytic core - and CF(0) - the membrane proton channel. CF(1) has five subunits: alpha(3), beta(3), gamma(1), delta(1), epsilon(1). CF(0) has four main subunits: a, b, b' and c.

Its subcellular location is the cell inner membrane. Functionally, key component of the proton channel; it plays a direct role in the translocation of protons across the membrane. This Pelodictyon phaeoclathratiforme (strain DSM 5477 / BU-1) protein is ATP synthase subunit a.